Here is a 442-residue protein sequence, read N- to C-terminus: Inner membrane protein PPF-1, chloroplastic (442 aa).

The Lumenal segment spans residues 1-108 (MAKTLISSPS…EFVLKVLKDG (108 aa)). A helical membrane pass occupies residues 109-129 (LSSVHVPYSYGFAIILLTVIV). Residues 130–183 (KAATLPLTKQQVESTLAMQNLQPKIKAIQERYAGNQERIQLETSRLYTQAGVNP) lie on the Stromal side of the membrane. A helical membrane pass occupies residues 184–204 (LAGCLPTLATIPVWIGLYQAL). The Lumenal portion of the chain corresponds to 205 to 296 (SNVANEGLLT…QKNTLLIFKF (92 aa)). Residues 297 to 317 (LPLMIGYFSLSVPSGLTIYWF) form a helical membrane-spanning segment. Over 318 to 442 (TNNVLSTAQQ…SKRSKRKPVA (125 aa)) the chain is Stromal. Disordered regions lie at residues 350–371 (AGQAKRSASKPEKGGERFRQLK) and 390–442 (PLAS…KPVA). The span at 358 to 371 (SKPEKGGERFRQLK) shows a compositional bias: basic and acidic residues. The span at 414–427 (ESNTSKVSQEVQSF) shows a compositional bias: polar residues. Residues 431-442 (RRSKRSKRKPVA) show a composition bias toward basic residues.

The protein belongs to the OXA1/ALB3/YidC (TC 2.A.9.2) family. As to expression, highly expressed in apical buds. Low levels of expression in leaves. Not expressed in roots, and stems.

The protein localises to the plastid. It localises to the chloroplast thylakoid membrane. May be required for the insertion of some integral membrane proteins into the chloroplast thylakoid membrane. May play a role in inhibiting senescence. This chain is Inner membrane protein PPF-1, chloroplastic (PPF-1), found in Pisum sativum (Garden pea).